Reading from the N-terminus, the 301-residue chain is Pyridoxal 5'-phosphate synthase subunit PdxS (301 aa).

D31 serves as a coordination point for D-ribose 5-phosphate. K88 acts as the Schiff-base intermediate with D-ribose 5-phosphate in catalysis. G160 is a D-ribose 5-phosphate binding site. R172 provides a ligand contact to D-glyceraldehyde 3-phosphate. D-ribose 5-phosphate-binding positions include G221 and G242–S243. The segment at E273–I301 is disordered. Over residues E292–I301 the composition is skewed to basic and acidic residues.

The protein belongs to the PdxS/SNZ family. In the presence of PdxT, forms a dodecamer of heterodimers.

It catalyses the reaction aldehydo-D-ribose 5-phosphate + D-glyceraldehyde 3-phosphate + L-glutamine = pyridoxal 5'-phosphate + L-glutamate + phosphate + 3 H2O + H(+). Its pathway is cofactor biosynthesis; pyridoxal 5'-phosphate biosynthesis. In terms of biological role, catalyzes the formation of pyridoxal 5'-phosphate from ribose 5-phosphate (RBP), glyceraldehyde 3-phosphate (G3P) and ammonia. The ammonia is provided by the PdxT subunit. Can also use ribulose 5-phosphate and dihydroxyacetone phosphate as substrates, resulting from enzyme-catalyzed isomerization of RBP and G3P, respectively. The sequence is that of Pyridoxal 5'-phosphate synthase subunit PdxS from Natronomonas pharaonis (strain ATCC 35678 / DSM 2160 / CIP 103997 / JCM 8858 / NBRC 14720 / NCIMB 2260 / Gabara) (Halobacterium pharaonis).